Reading from the N-terminus, the 346-residue chain is Phosphoribosylformylglycinamidine cyclo-ligase (346 aa).

This sequence belongs to the AIR synthase family.

The protein localises to the cytoplasm. It catalyses the reaction 2-formamido-N(1)-(5-O-phospho-beta-D-ribosyl)acetamidine + ATP = 5-amino-1-(5-phospho-beta-D-ribosyl)imidazole + ADP + phosphate + H(+). The protein operates within purine metabolism; IMP biosynthesis via de novo pathway; 5-amino-1-(5-phospho-D-ribosyl)imidazole from N(2)-formyl-N(1)-(5-phospho-D-ribosyl)glycinamide: step 2/2. This Bacillus licheniformis (strain ATCC 14580 / DSM 13 / JCM 2505 / CCUG 7422 / NBRC 12200 / NCIMB 9375 / NCTC 10341 / NRRL NRS-1264 / Gibson 46) protein is Phosphoribosylformylglycinamidine cyclo-ligase.